We begin with the raw amino-acid sequence, 95 residues long: Phospholipase A2 inhibitor gammaCdcPLI (95 aa).

Disulfide bonds link C2-C26, C5-C12, C19-C30, and C61-C77.

Forms dimers or higher order oligomers in a temperature-dependent manner in vitro. In terms of tissue distribution, expressed by the liver.

Its subcellular location is the secreted. Its function is as follows. Inhibits the enzymatic activity of basic and acidic PLA2 from B.jararacussu and B.pauloensis, respectively, in a dose-dependent manner. Also inhibits myotoxicity and cytotoxicity of BnSp-7 of B.pauloensis. The protein is Phospholipase A2 inhibitor gammaCdcPLI of Crotalus durissus collilineatus (Brazilian rattlesnake).